Reading from the N-terminus, the 1434-residue chain is Inositol hexakisphosphate and diphosphoinositol-pentakisphosphate kinase 1 (1434 aa).

66 to 67 (KK) contributes to the substrate binding site. Residues R147, K200, H207, R226, 250-253 (EEFM), and 259-261 (DVK) each bind ATP. 226-227 (RK) is a binding site for substrate. K261 and R275 together coordinate substrate. ATP is bound by residues S277, D322, and 334–336 (DVN). 339–342 (SFVK) contacts substrate. The segment at 384–455 (PTTSGTMMEL…VLDITRLLLA (72 aa)) is polyphosphoinositide-binding domain. The interval 916–1017 (EGSAPAGCGF…PTEMKQSGLG (102 aa)) is disordered. Phosphoserine occurs at positions 941 and 984. Residues 1002–1017 (FSSSRPPTEMKQSGLG) are compositionally biased toward polar residues. Phosphoserine occurs at positions 1034, 1070, 1142, and 1149. Disordered stretches follow at residues 1133–1193 (NHQA…GFSD), 1228–1251 (ESTQ…DTEV), and 1396–1434 (TDNP…EDIS). A compositionally biased stretch (low complexity) spans 1165 to 1183 (SSGPSSTVSSAGPSSPTTV). The segment covering 1403 to 1434 (LSEETDLQAQEVSEEIDQEPEVVDELSNEDIS) has biased composition (acidic residues).

This sequence belongs to the histidine acid phosphatase family. VIP1 subfamily.

The protein localises to the cytoplasm. The protein resides in the cytosol. It localises to the cell membrane. It catalyses the reaction 1D-myo-inositol hexakisphosphate + ATP = 1-diphospho-1D-myo-inositol 2,3,4,5,6-pentakisphosphate + ADP. It carries out the reaction 5-diphospho-1D-myo-inositol 1,2,3,4,6-pentakisphosphate + ATP + H(+) = 1,5-bis(diphospho)-1D-myo-inositol 2,3,4,6-tetrakisphosphate + ADP. Its function is as follows. Bifunctional inositol kinase that acts in concert with the IP6K kinases IP6K1, IP6K2 and IP6K3 to synthesize the diphosphate group-containing inositol pyrophosphates diphosphoinositol pentakisphosphate, PP-InsP5, and bis-diphosphoinositol tetrakisphosphate, (PP)2-InsP4. PP-InsP5 and (PP)2-InsP4, also respectively called InsP7 and InsP8, regulate a variety of cellular processes, including apoptosis, vesicle trafficking, cytoskeletal dynamics, exocytosis, insulin signaling and neutrophil activation. Phosphorylates inositol hexakisphosphate (InsP6) at position 1 to produce PP-InsP5 which is in turn phosphorylated by IP6Ks to produce (PP)2-InsP4. Alternatively, phosphorylates PP-InsP5 at position 1, produced by IP6Ks from InsP6, to produce (PP)2-InsP4. Activated when cells are exposed to hyperosmotic stress. The protein is Inositol hexakisphosphate and diphosphoinositol-pentakisphosphate kinase 1 of Rattus norvegicus (Rat).